We begin with the raw amino-acid sequence, 343 residues long: Aspartate-semialdehyde dehydrogenase (343 aa).

NADP(+)-binding positions include 20-23 and 48-49; these read SGAV and RS. R108 is a phosphate binding site. The active-site Acyl-thioester intermediate is the C137. Q164 is a binding site for substrate. NADP(+) is bound at residue 167–168; the sequence is SG. Residue K221 participates in phosphate binding. R243 is a binding site for substrate. Residue H250 is the Proton acceptor of the active site. Q323 provides a ligand contact to NADP(+).

The protein belongs to the aspartate-semialdehyde dehydrogenase family. As to quaternary structure, homodimer.

It catalyses the reaction L-aspartate 4-semialdehyde + phosphate + NADP(+) = 4-phospho-L-aspartate + NADPH + H(+). It participates in amino-acid biosynthesis; L-lysine biosynthesis via DAP pathway; (S)-tetrahydrodipicolinate from L-aspartate: step 2/4. Its pathway is amino-acid biosynthesis; L-methionine biosynthesis via de novo pathway; L-homoserine from L-aspartate: step 2/3. The protein operates within amino-acid biosynthesis; L-threonine biosynthesis; L-threonine from L-aspartate: step 2/5. In terms of biological role, catalyzes the NADPH-dependent formation of L-aspartate-semialdehyde (L-ASA) by the reductive dephosphorylation of L-aspartyl-4-phosphate. The sequence is that of Aspartate-semialdehyde dehydrogenase from Prochlorococcus marinus (strain SARG / CCMP1375 / SS120).